Here is a 487-residue protein sequence, read N- to C-terminus: b(0,+)-type amino acid transporter 1 (487 aa).

Basic and acidic residues predominate over residues 1-20 (MEETSPRRRREDEKSVHSTE). A disordered region spans residues 1-23 (MEETSPRRRREDEKSVHSTEPKT). At 1–31 (MEETSPRRRREDEKSVHSTEPKTTSLQKEVG) the chain is on the cytoplasmic side. S18 bears the Phosphoserine mark. Residues 32–55 (LLSGICIIVGTIIGSGIFISPKSV) form a helical membrane-spanning segment. Residue 43-47 (IIGSG) participates in L-arginine binding. Over 56-62 (LANTESV) the chain is Extracellular. Residues 63 to 84 (GPCLIIWAACGVLATLGALCFA) traverse the membrane as a helical segment. Residues 85–110 (ELGTMITKSGGEYPYLMEAFGPIPAY) lie on the Cytoplasmic side of the membrane. A helical membrane pass occupies residues 111 to 137 (LFSWTSLIVMKPSSFAIICLSFSEYVC). The Extracellular segment spans residues 138–147 (AAFYLGCRPP). A run of 2 helical transmembrane segments spans residues 148–169 (AVVVKLLAAAAILLITTVNALS) and 170–193 (VRLGSYVQNVFTAAKLVIVAIIII). At 194 to 217 (SGLVLLAQGNVKNFQNSFEGSQTS) the chain is on the extracellular side. A helical transmembrane segment spans residues 218–238 (VGSISLAFYNGLWAYDGWNQL). Position 233 (D233) interacts with L-arginine. Residues 239–251 (NYITEELRNPYRN) are Cytoplasmic-facing. Residues 252 to 274 (LPMAIVIGIPLVTVCYILMNIAY) form a helical membrane-spanning segment. The Extracellular portion of the chain corresponds to 275–302 (FTVMTPTELLQSQAVAVTFGDRVLYPAS). The chain crosses the membrane as a helical span at residues 303–325 (WVVPLFVAFSTIGAANGTCFTAG). At 326–351 (RLIYVAGREGHMLKVLSYISVKRLTP) the chain is on the cytoplasmic side. Transmembrane regions (helical) follow at residues 352 to 370 (APALVFYGIIAIIYIIPGD) and 371 to 391 (INSLVNYFSFAAWLFYGMTIL). Residues 392 to 410 (GLVVMRFTRKDLERPIKVP) lie on the Cytoplasmic side of the membrane. Residues 411–431 (IFIPIIVILVSVFLILAPIIS) form a helical membrane-spanning segment. Residues 432–434 (SPA) are Extracellular-facing. Residues 435 to 450 (WEYLYCVLFILSGLIF) traverse the membrane as a helical segment. The Cytoplasmic portion of the chain corresponds to 451-487 (YFLFVHYKFRWAQKISRPITKHLQMLMEVVPPEKDPE).

The protein belongs to the amino acid-polyamine-organocation (APC) superfamily. Disulfide-linked heterodimer composed of the catalytic light chain subunit SLC7A9 and the heavy chain subunit SLC3A1. The heterodimer is the minimal functional unit. Assembles in heterotetramers (dimers of heterodimers) and higher order oligomers; the oligomerization is mediated by SLC3A1 likely to prevent degradation and facilitate heteromer trafficking to the plasma membrane. Interacts with CAV1. In terms of tissue distribution, outer medulla of kidney (at protein level). Kidney and small intestine. In the kidney localized to the apical membrane of the proximal tubules.

It localises to the apical cell membrane. It catalyses the reaction L-leucine(out) + L-arginine(in) = L-leucine(in) + L-arginine(out). The enzyme catalyses L-histidine(out) + L-arginine(in) = L-histidine(in) + L-arginine(out). The catalysed reaction is L-arginine(in) + L-phenylalanine(out) = L-arginine(out) + L-phenylalanine(in). It carries out the reaction L-cysteine(out) + L-arginine(in) = L-cysteine(in) + L-arginine(out). It catalyses the reaction L-cystine(out) + L-arginine(in) = L-cystine(in) + L-arginine(out). The enzyme catalyses L-lysine(out) + L-arginine(in) = L-lysine(in) + L-arginine(out). Associates with SLC3A1 to form a functional transporter complex that mediates the electrogenic exchange between cationic amino acids and neutral amino acids, with a stoichiometry of 1:1. Has system b(0,+)-like activity with high affinity for extracellular cationic amino acids and L-cystine and lower affinity for intracellular neutral amino acids. Substrate exchange is driven by high concentration of intracellular neutral amino acids and the intracellular reduction of L-cystine to L-cysteine. Required for reabsorption of L-cystine and dibasic amino acids across the brush border membrane in renal proximal tubules. This is b(0,+)-type amino acid transporter 1 (Slc7a9) from Rattus norvegicus (Rat).